Reading from the N-terminus, the 349-residue chain is Phosphate acetyltransferase (349 aa).

The protein belongs to the phosphate acetyltransferase and butyryltransferase family.

The protein localises to the cytoplasm. It catalyses the reaction acetyl-CoA + phosphate = acetyl phosphate + CoA. It functions in the pathway metabolic intermediate biosynthesis; acetyl-CoA biosynthesis; acetyl-CoA from acetate: step 2/2. The protein is Phosphate acetyltransferase (pta) of Rickettsia typhi (strain ATCC VR-144 / Wilmington).